A 149-amino-acid chain; its full sequence is Large ribosomal subunit protein uL22c (149 aa).

This sequence belongs to the universal ribosomal protein uL22 family. As to quaternary structure, part of the 50S ribosomal subunit.

The protein resides in the plastid. It localises to the chloroplast. In terms of biological role, this protein binds specifically to 23S rRNA. The globular domain of the protein is located near the polypeptide exit tunnel on the outside of the subunit, while an extended beta-hairpin is found that lines the wall of the exit tunnel in the center of the 70S ribosome. This chain is Large ribosomal subunit protein uL22c (rpl22), found in Brachypodium distachyon (Purple false brome).